The following is a 196-amino-acid chain: ATP-dependent Clp protease proteolytic subunit (196 aa).

S96 (nucleophile) is an active-site residue. The active site involves H121.

The protein belongs to the peptidase S14 family. Fourteen ClpP subunits assemble into 2 heptameric rings which stack back to back to give a disk-like structure with a central cavity, resembling the structure of eukaryotic proteasomes.

Its subcellular location is the cytoplasm. The catalysed reaction is Hydrolysis of proteins to small peptides in the presence of ATP and magnesium. alpha-casein is the usual test substrate. In the absence of ATP, only oligopeptides shorter than five residues are hydrolyzed (such as succinyl-Leu-Tyr-|-NHMec, and Leu-Tyr-Leu-|-Tyr-Trp, in which cleavage of the -Tyr-|-Leu- and -Tyr-|-Trp bonds also occurs).. Cleaves peptides in various proteins in a process that requires ATP hydrolysis. Has a chymotrypsin-like activity. Plays a major role in the degradation of misfolded proteins. The protein is ATP-dependent Clp protease proteolytic subunit of Streptococcus salivarius.